The sequence spans 355 residues: Phosphoribosylformylglycinamidine cyclo-ligase (355 aa).

It belongs to the AIR synthase family.

The protein localises to the cytoplasm. It catalyses the reaction 2-formamido-N(1)-(5-O-phospho-beta-D-ribosyl)acetamidine + ATP = 5-amino-1-(5-phospho-beta-D-ribosyl)imidazole + ADP + phosphate + H(+). It participates in purine metabolism; IMP biosynthesis via de novo pathway; 5-amino-1-(5-phospho-D-ribosyl)imidazole from N(2)-formyl-N(1)-(5-phospho-D-ribosyl)glycinamide: step 2/2. The protein is Phosphoribosylformylglycinamidine cyclo-ligase of Paraburkholderia xenovorans (strain LB400).